We begin with the raw amino-acid sequence, 376 residues long: Protein RecA (376 aa).

65 to 72 (GPESSGKT) serves as a coordination point for ATP. Positions 316-376 (EHDEIFTSVR…GDDLSDDDIY (61 aa)) are disordered. Residues 331–350 (GEKKDSDEDPGDNKKSKDSA) are compositionally biased toward basic and acidic residues. Acidic residues predominate over residues 366 to 376 (PGDDLSDDDIY).

It belongs to the RecA family.

The protein localises to the cytoplasm. Functionally, can catalyze the hydrolysis of ATP in the presence of single-stranded DNA, the ATP-dependent uptake of single-stranded DNA by duplex DNA, and the ATP-dependent hybridization of homologous single-stranded DNAs. It interacts with LexA causing its activation and leading to its autocatalytic cleavage. The polypeptide is Protein RecA (Oenococcus oeni (strain ATCC BAA-331 / PSU-1)).